The chain runs to 389 residues: Transcription factor MYB97 (389 aa).

HTH myb-type domains follow at residues 16–68 (GVVL…ANHL) and 69–123 (RPNL…KRFQ). 2 DNA-binding regions (H-T-H motif) span residues 44-68 (WNSV…ANHL) and 96-119 (WARM…NTRL). The tract at residues 131-159 (PPEYSQNNHQQQMYPQQPSSPLPSQTPAS) is disordered. Residues 140-159 (QQQMYPQQPSSPLPSQTPAS) are compositionally biased toward low complexity.

As to expression, accumulates in pollen grains and pollen tube. Mostly expressed in mature pollen grains, and, to a lower extent, in inflorescences and siliques.

It is found in the nucleus. Transcription activator. Binds to 5'-CAACTGTC-3' and/or 5'-TAACAAA-3' motif in target gene promoter to promote their expression. Together with MYB101 and MYB120, functions as a male factor that controls pollen tube-synergid interaction in fertilization. Required for pollen tube growth arrest and sperm cell release in the female gametophyte, probably via the regulation of pollen tube-specific gene expression. The chain is Transcription factor MYB97 from Arabidopsis thaliana (Mouse-ear cress).